Consider the following 490-residue polypeptide: GTPase Der (490 aa).

The 165-residue stretch at 1–165 (MRIAILGRPN…RIRQVAEIPL (165 aa)) folds into the EngA-type G 1 domain. GTP is bound by residues 7–14 (GRPNVGKS), 54–58 (DTGGV), and 117–120 (NKAD). Positions 165-184 (LPSAEEQENTQEEEFSSKES) are disordered. Residues 169-178 (EEQENTQEEE) show a composition bias toward acidic residues. One can recognise an EngA-type G 2 domain in the interval 227 to 400 (LKVALIGHPN…AVDDVYTIAT (174 aa)). GTP contacts are provided by residues 233–240 (GHPNVGKS), 280–284 (DTAGL), and 345–348 (NKWD). Residues 401–485 (TKLSTSLVNK…PFDLEYKAKP (85 aa)) enclose the KH-like domain.

Belongs to the TRAFAC class TrmE-Era-EngA-EngB-Septin-like GTPase superfamily. EngA (Der) GTPase family. As to quaternary structure, associates with the 50S ribosomal subunit.

GTPase that plays an essential role in the late steps of ribosome biogenesis. In Chlamydia muridarum (strain MoPn / Nigg), this protein is GTPase Der.